The chain runs to 355 residues: Serum paraoxonase/arylesterase 1 (355 aa).

A disulfide bridge connects residues Cys-42 and Cys-353. Residues Glu-53 and Asp-54 each coordinate Ca(2+). His-115 acts as the Proton acceptor in catalysis. Positions 117, 168, 169, and 224 each coordinate Ca(2+). Asn-253 carries N-linked (GlcNAc...) asparagine glycosylation. Ca(2+) contacts are provided by Asp-269 and Asn-270. N-linked (GlcNAc...) asparagine glycans are attached at residues Asn-270 and Asn-324.

This sequence belongs to the paraoxonase family. Homodimer. Interacts with CLU. It depends on Ca(2+) as a cofactor. In terms of processing, the signal sequence is not cleaved. Plasma, liver, kidney, heart, brain, small intestine and lung. In the plasma, associated with HDL.

The protein resides in the secreted. Its subcellular location is the extracellular space. The enzyme catalyses a phenyl acetate + H2O = a phenol + acetate + H(+). It carries out the reaction An aryl dialkyl phosphate + H2O = dialkyl phosphate + an aryl alcohol.. It catalyses the reaction an N-acyl-L-homoserine lactone + H2O = an N-acyl-L-homoserine + H(+). Hydrolyzes the toxic metabolites of a variety of organophosphorus insecticides. Capable of hydrolyzing a broad spectrum of organophosphate substrates and lactones, and a number of aromatic carboxylic acid esters. Mediates an enzymatic protection of low density lipoproteins against oxidative modification. This Mus musculus (Mouse) protein is Serum paraoxonase/arylesterase 1 (Pon1).